A 255-amino-acid chain; its full sequence is 5'-nucleotidase SurE (255 aa).

4 residues coordinate a divalent metal cation: Asp8, Asp9, Ser39, and Asn95.

The protein belongs to the SurE nucleotidase family. A divalent metal cation is required as a cofactor.

Its subcellular location is the cytoplasm. It catalyses the reaction a ribonucleoside 5'-phosphate + H2O = a ribonucleoside + phosphate. Functionally, nucleotidase that shows phosphatase activity on nucleoside 5'-monophosphates. The sequence is that of 5'-nucleotidase SurE from Herpetosiphon aurantiacus (strain ATCC 23779 / DSM 785 / 114-95).